The sequence spans 935 residues: Potassium channel AKT1 (935 aa).

Topologically, residues 1-106 (MARWGAARMA…YDRRYRIWET (106 aa)) are cytoplasmic. A helical membrane pass occupies residues 107 to 127 (FLIVLVVYSAWVSPFEFGFIP). The Extracellular portion of the chain corresponds to 128–136 (KPTGALATA). Residues 137–157 (DNVVNAFFAVDIILTFFVAYL) form a helical membrane-spanning segment. Residues 158–178 (DKMSYMLEDDPKKIAWRYSTT) are Cytoplasmic-facing. Residues 179–199 (WLVLDVASTIPSEFARRILPS) traverse the membrane as a helical segment. Residues 200 to 205 (KLRSYG) lie on the Extracellular side of the membrane. A helical; Voltage-sensor transmembrane segment spans residues 206-226 (FFNMLRLWRLRRVSSLFSRLE). Residues 227–240 (KDRHFNYFWVRCAK) lie on the Cytoplasmic side of the membrane. A helical membrane pass occupies residues 241–261 (LICVTLFAVHCAACFYYLLAD). At 262–288 (RYPVPTSTWIGNYMADFHERSLWIRYV) the chain is on the extracellular side. Residues 289–308 (TSVYWSITTLTTVGYGDLHA) constitute an intramembrane region (pore-forming). Over 309–312 (ENTR) the chain is Extracellular. Residues 313 to 333 (EMIFNIFYMLFNLGLTAYLIG) traverse the membrane as a helical segment. The Cytoplasmic portion of the chain corresponds to 334–935 (NMTNLVVHGT…WDAEKMKGKS (602 aa)). 419–538 (LFQGVSNDLI…TIIMNNLIQF (120 aa)) contacts a nucleoside 3',5'-cyclic phosphate. ANK repeat units lie at residues 565-594 (DLPI…DPNE), 598-627 (DGHT…DPNA), 631-660 (EGKV…DLSS), 662-691 (DTGL…DVNR), 695-724 (DGTT…DIDK), and 728-757 (NGWT…ATAS). The segment at 826-854 (SQAQRETDHPLSRGGLAATGSPNPSSGSR) is disordered. Residues 845–854 (GSPNPSSGSR) show a composition bias toward polar residues. In terms of domain architecture, KHA spans 859-935 (RVTISCPEKG…WDAEKMKGKS (77 aa)).

The protein belongs to the potassium channel family. Plant (TC 1.A.1.4) subfamily. In terms of assembly, the potassium channel is probably a homo- or heterotetrameric complex of pore-forming subunits. Highly expressed in the epidermis and endodermis of roots, and at lower level in cells of the vasculature and the cortex. Expressed in xylem parenchyma, phloem and mesophyll cells of leaves.

It localises to the membrane. Highly selective inward-rectifying potassium channel that mediates potassium uptake by plant roots. The polypeptide is Potassium channel AKT1 (AKT1) (Oryza sativa subsp. indica (Rice)).